A 194-amino-acid polypeptide reads, in one-letter code: Orotate phosphoribosyltransferase (194 aa).

Residue 117-125 (EDVVTTGLS) participates in 5-phospho-alpha-D-ribose 1-diphosphate binding. Orotate-binding residues include T121 and R149.

It belongs to the purine/pyrimidine phosphoribosyltransferase family. PyrE subfamily. In terms of assembly, homodimer. Requires Mg(2+) as cofactor.

The enzyme catalyses orotidine 5'-phosphate + diphosphate = orotate + 5-phospho-alpha-D-ribose 1-diphosphate. It functions in the pathway pyrimidine metabolism; UMP biosynthesis via de novo pathway; UMP from orotate: step 1/2. Functionally, catalyzes the transfer of a ribosyl phosphate group from 5-phosphoribose 1-diphosphate to orotate, leading to the formation of orotidine monophosphate (OMP). The chain is Orotate phosphoribosyltransferase from Novosphingobium aromaticivorans (strain ATCC 700278 / DSM 12444 / CCUG 56034 / CIP 105152 / NBRC 16084 / F199).